Here is a 303-residue protein sequence, read N- to C-terminus: Eukaryotic translation initiation factor 3 subunit F (303 aa).

Residues 1–10 (MSLDTSSSAI) show a composition bias toward polar residues. The tract at residues 1–25 (MSLDTSSSAIHLQLPPTSSSLRPPS) is disordered. Low complexity predominate over residues 12 to 25 (LQLPPTSSSLRPPS). Residues 27–165 (ITVHPSVIAQ…VKGWVSQPLG (139 aa)) form the MPN domain.

It belongs to the eIF-3 subunit F family. Component of the eukaryotic translation initiation factor 3 (eIF-3) complex.

Its subcellular location is the cytoplasm. Its function is as follows. Component of the eukaryotic translation initiation factor 3 (eIF-3) complex, which is involved in protein synthesis of a specialized repertoire of mRNAs and, together with other initiation factors, stimulates binding of mRNA and methionyl-tRNAi to the 40S ribosome. The eIF-3 complex specifically targets and initiates translation of a subset of mRNAs involved in cell proliferation. The chain is Eukaryotic translation initiation factor 3 subunit F from Cryptococcus neoformans var. neoformans serotype D (strain B-3501A) (Filobasidiella neoformans).